We begin with the raw amino-acid sequence, 487 residues long: UDP-glycosyltransferase 85A7 (487 aa).

UDP-alpha-D-glucose-binding positions include 364 to 366 (CPQ), 381 to 389 (HCGWNSTLE), and 403 to 406 (FSEQ).

It belongs to the UDP-glycosyltransferase family. As to expression, expressed in roots, shoots, leaves and flowers.

The chain is UDP-glycosyltransferase 85A7 (UGT85A7) from Arabidopsis thaliana (Mouse-ear cress).